The chain runs to 228 residues: Orotidine 5'-phosphate decarboxylase (228 aa).

Substrate-binding positions include D8, K30, 59-68, T118, R178, Q187, G207, and R208; that span reads DLKLHDIPNT. Catalysis depends on K61, which acts as the Proton donor.

This sequence belongs to the OMP decarboxylase family. Type 1 subfamily. In terms of assembly, homodimer.

The catalysed reaction is orotidine 5'-phosphate + H(+) = UMP + CO2. It participates in pyrimidine metabolism; UMP biosynthesis via de novo pathway; UMP from orotate: step 2/2. In terms of biological role, catalyzes the decarboxylation of orotidine 5'-monophosphate (OMP) to uridine 5'-monophosphate (UMP). This chain is Orotidine 5'-phosphate decarboxylase, found in Wolinella succinogenes (strain ATCC 29543 / DSM 1740 / CCUG 13145 / JCM 31913 / LMG 7466 / NCTC 11488 / FDC 602W) (Vibrio succinogenes).